Here is a 346-residue protein sequence, read N- to C-terminus: Quinolinate synthase (346 aa).

Residues His47 and Ser68 each contribute to the iminosuccinate site. Cys113 contacts [4Fe-4S] cluster. Iminosuccinate contacts are provided by residues Tyr139–Asn141 and Ser156. Cys200 contributes to the [4Fe-4S] cluster binding site. Residues His226–Glu228 and Thr243 contribute to the iminosuccinate site. Cys297 contacts [4Fe-4S] cluster.

The protein belongs to the quinolinate synthase family. Type 1 subfamily. It depends on [4Fe-4S] cluster as a cofactor.

The protein resides in the cytoplasm. The enzyme catalyses iminosuccinate + dihydroxyacetone phosphate = quinolinate + phosphate + 2 H2O + H(+). It functions in the pathway cofactor biosynthesis; NAD(+) biosynthesis; quinolinate from iminoaspartate: step 1/1. Functionally, catalyzes the condensation of iminoaspartate with dihydroxyacetone phosphate to form quinolinate. This is Quinolinate synthase from Photorhabdus laumondii subsp. laumondii (strain DSM 15139 / CIP 105565 / TT01) (Photorhabdus luminescens subsp. laumondii).